Here is a 145-residue protein sequence, read N- to C-terminus: RNA polymerase-binding transcription factor DksA (145 aa).

Residues C108, C111, C129, and C132 each contribute to the Zn(2+) site. Residues 108–132 form a dksA C4-type zinc finger; that stretch reads CDCCGEEIGIRRLEARPTADLCIDC.

This sequence belongs to the DksA family. As to quaternary structure, interacts directly with the RNA polymerase.

The protein localises to the cytoplasm. In terms of biological role, transcription factor that acts by binding directly to the RNA polymerase (RNAP). Required for negative regulation of rRNA expression and positive regulation of several amino acid biosynthesis promoters. Also required for regulation of fis expression. This Haemophilus influenzae (strain ATCC 51907 / DSM 11121 / KW20 / Rd) protein is RNA polymerase-binding transcription factor DksA.